Here is a 164-residue protein sequence, read N- to C-terminus: 3-hydroxyacyl-[acyl-carrier-protein] dehydratase FabZ (164 aa).

The active site involves H61.

Belongs to the thioester dehydratase family. FabZ subfamily.

The protein resides in the cytoplasm. The catalysed reaction is a (3R)-hydroxyacyl-[ACP] = a (2E)-enoyl-[ACP] + H2O. In terms of biological role, involved in unsaturated fatty acids biosynthesis. Catalyzes the dehydration of short chain beta-hydroxyacyl-ACPs and long chain saturated and unsaturated beta-hydroxyacyl-ACPs. This chain is 3-hydroxyacyl-[acyl-carrier-protein] dehydratase FabZ, found in Ralstonia nicotianae (strain ATCC BAA-1114 / GMI1000) (Ralstonia solanacearum).